The chain runs to 232 residues: Dysfunctional anti-sigma-K factor RskA (232 aa).

The Cytoplasmic portion of the chain corresponds to 1–90 (MTEHTDFELL…EVRRQSRWRT (90 aa)). The helical transmembrane segment at 91 to 111 (AAFASAAAIAVGLGAFDLGVL) threads the bilayer. Residues 112–232 (TRPSPPPTVA…GTILAELPLG (121 aa)) lie on the Extracellular side of the membrane.

It belongs to the anti-sigma-K factor family.

Its subcellular location is the cell membrane. In terms of biological role, an anti-sigma factor for extracytoplasmic function (ECF) sigma factor SigK. ECF sigma factors are held in an inactive form by an anti-sigma factor until released by regulated intramembrane proteolysis (RIP). However, in M.bovis this protein is probably dysfunctional, due to at least 1 of the 2 naturally occurring polymorphisms in its gene, when compared to M.tuberculosis. This leads to an increased expression of SigK-regulated genes, such as mpb70 and mpb83. RIP occurs when an extracytoplasmic signal triggers a concerted proteolytic cascade to transmit information and elicit cellular responses. The membrane-spanning regulatory substrate protein is first cut extracytoplasmically (site-1 protease, S1P), then within the membrane itself (site-2 protease, S2P, Rip1), while cytoplasmic proteases finish degrading the regulatory protein, liberating the sigma factor. The protein is Dysfunctional anti-sigma-K factor RskA (rskA) of Mycobacterium bovis (strain ATCC BAA-935 / AF2122/97).